A 178-amino-acid polypeptide reads, in one-letter code: Large ribosomal subunit protein uL6 (178 aa).

The protein belongs to the universal ribosomal protein uL6 family. As to quaternary structure, part of the 50S ribosomal subunit.

Its function is as follows. This protein binds to the 23S rRNA, and is important in its secondary structure. It is located near the subunit interface in the base of the L7/L12 stalk, and near the tRNA binding site of the peptidyltransferase center. This is Large ribosomal subunit protein uL6 from Francisella tularensis subsp. tularensis (strain FSC 198).